The primary structure comprises 660 residues: Bifunctional polymyxin resistance protein ArnA (660 aa).

Residues 1 to 304 are formyltransferase ArnAFT; it reads MKTVVFAYHD…MLGLVQGSRL (304 aa). Residue 86–88 coordinates (6R)-10-formyltetrahydrofolate; sequence HLI. Residue His-104 is the Proton donor; for formyltransferase activity of the active site. (6R)-10-formyltetrahydrofolate is bound by residues Arg-114 and 136 to 140; that span reads VKRAD. Residues 314–660 are dehydrogenase ArnADH; that stretch reads RRTRVLILGV…RTVDLTDKPS (347 aa). NAD(+) is bound by residues Asp-347 and 368 to 369; that span reads DI. UDP-alpha-D-glucuronate-binding positions include Ala-393, Tyr-398, and 432–433; that span reads TS. The Proton acceptor; for decarboxylase activity role is filled by Glu-434. UDP-alpha-D-glucuronate-binding positions include Arg-460, Asn-492, 526–535, and Tyr-613; that span reads KLIDGGKQKR. Arg-619 functions as the Proton donor; for decarboxylase activity in the catalytic mechanism.

In the N-terminal section; belongs to the Fmt family. UDP-L-Ara4N formyltransferase subfamily. The protein in the C-terminal section; belongs to the NAD(P)-dependent epimerase/dehydratase family. UDP-glucuronic acid decarboxylase subfamily. Homohexamer, formed by a dimer of trimers.

It catalyses the reaction UDP-alpha-D-glucuronate + NAD(+) = UDP-beta-L-threo-pentopyranos-4-ulose + CO2 + NADH. It carries out the reaction UDP-4-amino-4-deoxy-beta-L-arabinose + (6R)-10-formyltetrahydrofolate = UDP-4-deoxy-4-formamido-beta-L-arabinose + (6S)-5,6,7,8-tetrahydrofolate + H(+). The protein operates within nucleotide-sugar biosynthesis; UDP-4-deoxy-4-formamido-beta-L-arabinose biosynthesis; UDP-4-deoxy-4-formamido-beta-L-arabinose from UDP-alpha-D-glucuronate: step 1/3. It participates in nucleotide-sugar biosynthesis; UDP-4-deoxy-4-formamido-beta-L-arabinose biosynthesis; UDP-4-deoxy-4-formamido-beta-L-arabinose from UDP-alpha-D-glucuronate: step 3/3. It functions in the pathway bacterial outer membrane biogenesis; lipopolysaccharide biosynthesis. Functionally, bifunctional enzyme that catalyzes the oxidative decarboxylation of UDP-glucuronic acid (UDP-GlcUA) to UDP-4-keto-arabinose (UDP-Ara4O) and the addition of a formyl group to UDP-4-amino-4-deoxy-L-arabinose (UDP-L-Ara4N) to form UDP-L-4-formamido-arabinose (UDP-L-Ara4FN). The modified arabinose is attached to lipid A and is required for resistance to polymyxin and cationic antimicrobial peptides. The protein is Bifunctional polymyxin resistance protein ArnA of Shigella sonnei (strain Ss046).